The chain runs to 768 residues: Post-transcriptional regulator MKT1 (768 aa).

This sequence belongs to the XPG/RAD2 endonuclease family. As to quaternary structure, interacts with PBP1.

Its subcellular location is the cytoplasm. It is found in the cytosol. In terms of biological role, involved in 3'-UTR mediated RNA regulation. Complexes with PBP1 to promote mRNA interactions with poly(A)-binding protein. The sequence is that of Post-transcriptional regulator MKT1 from Cryptococcus neoformans var. grubii serotype A (strain H99 / ATCC 208821 / CBS 10515 / FGSC 9487) (Filobasidiella neoformans var. grubii).